Here is a 752-residue protein sequence, read N- to C-terminus: Microtubule-associated protein tau (752 aa).

The segment at 1-567 is disordered; it reads MAEPRQEFDT…PVPMPDLKNV (567 aa). At Ala-2 the chain carries N-acetylalanine. Tyr-18 carries the phosphotyrosine modification. Residue Lys-33 forms a Glycyl lysine isopeptide (Lys-Gly) (interchain with G-Cter in ubiquitin) linkage. Phosphoserine occurs at positions 35 and 50. The span at 50–60 shows a compositional bias: polar residues; the sequence is SETSDAKSTPT. Thr-58, Thr-60, and Thr-100 each carry phosphothreonine. Polar residues predominate over residues 142 to 151; the sequence is SDWTHQQVPS. A compositionally biased stretch (basic and acidic residues) spans 173–182; the sequence is RPEDVERSHP. Phosphoserine is present on residues Ser-191 and Ser-204. A compositionally biased stretch (basic and acidic residues) spans 192-204; that stretch reads PQKEAWGKDRLGS. The span at 205 to 218 shows a compositional bias: acidic residues; it reads EEEVDEDITMDESS. Positions 219–229 are enriched in low complexity; sequence QESPPSQASLA. Polar residues predominate over residues 233–252; the sequence is ATPQARSVSASGVSGETTSI. Composition is skewed to basic and acidic residues over residues 289-313 and 374-385; these read EEGH…KEQD and SKDRTGNDEKKA. Polar residues-rich tracts occupy residues 387–400 and 432–446; these read TSTP…SNRP and KYVS…SPGT. A Phosphothreonine modification is found at Thr-464. Arg-466 carries the omega-N-methylarginine modification. N6,N6-dimethyllysine; alternate is present on Lys-474. Lys-474 bears the N6-acetyllysine; alternate mark. Thr-480, Thr-486, and Thr-487 each carry phosphothreonine. Ser-489 carries the post-translational modification Phosphoserine. Thr-492 carries the phosphothreonine modification. 3 positions are modified to phosphoserine: Ser-496, Ser-502, and Ser-506. A compositionally biased stretch (low complexity) spans 498–525; sequence EPPKSGERSGYSSPGSPGTPGSRSRTPS. Tyr-508 carries the phosphotyrosine modification. Residues Ser-509 and Ser-510 each carry the phosphoserine modification. Residue Ser-513 is modified to Phosphoserine; by CK1, PDPK1 and TTBK1. Phosphothreonine occurs at positions 516 and 523. Position 525 is a phosphoserine (Ser-525). Residue Thr-528 is modified to Phosphothreonine. At Lys-536 the chain carries N6-acetyllysine. The residue at position 542 (Thr-542) is a Phosphothreonine. A phosphoserine mark is found at Ser-546 and Ser-548. 4 Tau/MAP repeats span residues 555 to 585, 586 to 616, 617 to 647, and 648 to 679; these read QTAP…GGGK, VQII…GGGS, VHIV…GGGQ, and VEVK…GGGN. Lys-565 participates in a covalent cross-link: Glycyl lysine isopeptide (Lys-Gly) (interchain with G-Cter in ubiquitin). Lys-570 is modified (N6-acetyllysine; alternate). Lys-570 carries the N6-methyllysine; alternate modification. Lys-570 participates in a covalent cross-link: Glycyl lysine isopeptide (Lys-Gly) (interchain with G-Cter in ubiquitin); alternate. Position 573 is a phosphoserine (Ser-573). Lys-578 participates in a covalent cross-link: Glycyl lysine isopeptide (Lys-Gly) (interchain with G-Cter in ubiquitin). Lys-592 carries the N6-acetyllysine; alternate modification. Lys-592 participates in a covalent cross-link: Glycyl lysine isopeptide (Lys-Gly) (interchain with G-Cter in ubiquitin); alternate. Residues Ser-596 and Ser-600 each carry the phosphoserine modification. N6-acetyllysine is present on Lys-601. Cys-602 and Cys-633 are joined by a disulfide. Ser-604 carries the phosphoserine modification. An N6-acetyllysine; alternate modification is found at Lys-609. A Glycyl lysine isopeptide (Lys-Gly) (interchain with G-Cter in ubiquitin); alternate cross-link involves residue Lys-609. A Phosphoserine modification is found at Ser-616. Lys-622 is modified (N6,N6-dimethyllysine; alternate). N6-acetyllysine; alternate is present on residues Lys-622, Lys-628, and Lys-632. Glycyl lysine isopeptide (Lys-Gly) (interchain with G-Cter in ubiquitin); alternate cross-links involve residues Lys-622, Lys-628, and Lys-632. Residue Ser-635 is modified to Phosphoserine. N6-acetyllysine; alternate is present on residues Lys-642, Lys-654, and Lys-658. Glycyl lysine isopeptide (Lys-Gly) (interchain with G-Cter in ubiquitin); alternate cross-links involve residues Lys-642, Lys-654, and Lys-658. Residue Arg-660 is modified to Omega-N-methylarginine. Phosphoserine is present on Ser-663. Lys-664 is covalently cross-linked (Glycyl lysine isopeptide (Lys-Gly) (interchain with G-Cter in ubiquitin)). Residue Ser-667 is modified to Phosphoserine. Lys-680 is modified (N6-acetyllysine; alternate). Residue Lys-680 forms a Glycyl lysine isopeptide (Lys-Gly) (interchain with G-Cter in ubiquitin); alternate linkage. Lys-686 participates in a covalent cross-link: Glycyl lysine isopeptide (Lys-Gly) (interchain with G-Cter in ubiquitin). Lys-696 is modified (N6-acetyllysine; alternate). A Glycyl lysine isopeptide (Lys-Gly) (interchain with G-Cter in ubiquitin); alternate cross-link involves residue Lys-696. Residue Tyr-705 is modified to Phosphotyrosine. Ser-707 carries the phosphoserine; by CK1 and PDPK1 modification. The residue at position 711 (Ser-711) is a Phosphoserine. Residue Thr-714 is modified to Phosphothreonine. At Ser-715 the chain carries Phosphoserine; by CK1 and PDPK1. 3 positions are modified to phosphoserine: Ser-720, Ser-727, and Ser-733. Thr-738 carries the post-translational modification Phosphothreonine.

As to quaternary structure, interacts with MARK1, MARK2, MARK3 and MARK4. Interacts with SQSTM1 when polyubiquitinated. Interacts with PSMC2 through SQSTM1. Interacts with FKBP4. Binds to CSNK1D. Interacts with SGK1. Interacts with EPM2A; the interaction dephosphorylates MAPT at Ser-388. Interacts with PIN1. Interacts with LRRK2. Interacts with LRP1, leading to endocytosis; this interaction is reduced in the presence of LRPAP1/RAP. Polyubiquitinated. Requires functional TRAF6 and may provoke SQSTM1-dependent degradation by the proteasome. In terms of processing, phosphorylated at various serine and threonine residues in S-P or T-P motifs by proline-directed protein kinases (PDPK1, CDK1, CDK5, GSK3, MAPK) (a few sites per protein in interphase, more in mitosis), and at serine residues in K-X-G-S motifs by MAP/microtubule affinity-regulating kinase (MARK1, MARK2, MARK3, MARK4), causing detachment from microtubules, and their disassembly. Fetal Tau is much more phosphorylated than adult Tau. Phosphorylation at Ser-573 by BRSK1 and BRSK2 in neurons affects ability to bind microtubules and plays a role in neuron polarization. Phosphorylated by PHK. Dephosphorylation at several serine and threonine residues by the serine/threonine phosphatase PPP5C. Phosphorylation at Ser-204 by SGK1 mediates microtubule depolymerization and neurite formation in hippocampal neurons. Expressed in neurons. The larger forms (isoform tau-A and isoform tau-B) are preferentially expressed in the peripheral nervous system while the other are expressed in the central nervous system. Low amounts of the larger forms are also found in limited areas of the CNS.

It is found in the cytoplasm. The protein resides in the cytosol. Its subcellular location is the cell membrane. The protein localises to the cytoskeleton. It localises to the cell projection. It is found in the axon. The protein resides in the dendrite. Its subcellular location is the secreted. In terms of biological role, promotes microtubule assembly and stability, and might be involved in the establishment and maintenance of neuronal polarity. The C-terminus binds axonal microtubules while the N-terminus binds neural plasma membrane components, suggesting that tau functions as a linker protein between both. Axonal polarity is predetermined by tau localization (in the neuronal cell) in the domain of the cell body defined by the centrosome. The short isoforms allow plasticity of the cytoskeleton whereas the longer isoforms may preferentially play a role in its stabilization. This is Microtubule-associated protein tau from Rattus norvegicus (Rat).